Consider the following 349-residue polypeptide: Dihydroorotate dehydrogenase (quinone) (349 aa).

FMN-binding positions include 67 to 71 and Thr-91; that span reads AGLDK. Lys-71 contributes to the substrate binding site. 116-120 is a substrate binding site; the sequence is NRLGF. Residues Asn-147 and Asn-180 each contribute to the FMN site. Asn-180 is a substrate binding site. Ser-183 serves as the catalytic Nucleophile. Asn-185 is a substrate binding site. FMN contacts are provided by Lys-225 and Thr-253. 254–255 is a binding site for substrate; it reads NT. Residues Gly-276, Gly-305, and 326 to 327 contribute to the FMN site; that span reads YT.

It belongs to the dihydroorotate dehydrogenase family. Type 2 subfamily. In terms of assembly, monomer. FMN serves as cofactor.

It localises to the cell membrane. The catalysed reaction is (S)-dihydroorotate + a quinone = orotate + a quinol. The protein operates within pyrimidine metabolism; UMP biosynthesis via de novo pathway; orotate from (S)-dihydroorotate (quinone route): step 1/1. In terms of biological role, catalyzes the conversion of dihydroorotate to orotate with quinone as electron acceptor. The polypeptide is Dihydroorotate dehydrogenase (quinone) (Bordetella pertussis (strain Tohama I / ATCC BAA-589 / NCTC 13251)).